Reading from the N-terminus, the 182-residue chain is Large ribosomal subunit protein uL5 (182 aa).

This sequence belongs to the universal ribosomal protein uL5 family. As to quaternary structure, part of the 50S ribosomal subunit; part of the 5S rRNA/L5/L18/L25 subcomplex. Contacts the 5S rRNA and the P site tRNA. Forms a bridge to the 30S subunit in the 70S ribosome.

In terms of biological role, this is one of the proteins that bind and probably mediate the attachment of the 5S RNA into the large ribosomal subunit, where it forms part of the central protuberance. In the 70S ribosome it contacts protein S13 of the 30S subunit (bridge B1b), connecting the 2 subunits; this bridge is implicated in subunit movement. Contacts the P site tRNA; the 5S rRNA and some of its associated proteins might help stabilize positioning of ribosome-bound tRNAs. This is Large ribosomal subunit protein uL5 from Borrelia hermsii (strain HS1 / DAH).